The primary structure comprises 149 residues: Large ribosomal subunit protein uL15 (149 aa).

Residues 1–53 are disordered; the sequence is MRLHTLQPAPGAKSTRKRVGRGTSSGHGKTSGFGHKGQKARSGRVGKRGFEGG. A compositionally biased stretch (gly residues) spans 23 to 35; sequence TSSGHGKTSGFGH. The segment covering 36-47 has biased composition (basic residues); sequence KGQKARSGRVGK.

It belongs to the universal ribosomal protein uL15 family. As to quaternary structure, part of the 50S ribosomal subunit.

Its function is as follows. Binds to the 23S rRNA. This Coprothermobacter proteolyticus (strain ATCC 35245 / DSM 5265 / OCM 4 / BT) protein is Large ribosomal subunit protein uL15.